The following is a 422-amino-acid chain: WD repeat and SOCS box-containing protein 1 (422 aa).

WD repeat units follow at residues 124–165 (SRCV…LLLN), 168–208 (DHTE…NMMK), 212–251 (GHQNWVYCCAFSPDSSMLCSVGAGKAVFLWDMDKYTMIRK), 254–293 (GHYNDVVACEFSPDGALLATASYDTRVYVWDPHIGSILFE), and 309–346 (DNGRWVKSVSFSHDGVHIASLADDNLVRFWRIDKSYPV). Residues 374–422 (NAYFWSTPKYVSSLQHLCRMAIRRVMNTNEVKKLPIPQKIMEFLTYQTM) enclose the SOCS box domain.

Component of a probable ECS E3 ubiquitin-protein ligase complex that contains the Elongin BC complex.

It participates in protein modification; protein ubiquitination. Probable substrate-recognition component of a SCF-like ECS (Elongin-Cullin-SOCS-box protein) E3 ubiquitin-protein ligase complex which mediates the ubiquitination and subsequent proteasomal degradation of target proteins. The protein is WD repeat and SOCS box-containing protein 1 (wsb1) of Xenopus tropicalis (Western clawed frog).